A 454-amino-acid polypeptide reads, in one-letter code: Glutamyl-tRNA reductase (454 aa).

Residues 49 to 52 (TCNR), S109, 114 to 116 (ETQ), and Q120 contribute to the substrate site. The Nucleophile role is filled by C50. 189-194 (GAGKMS) is a binding site for NADP(+). Positions 432-442 (DHAEQSWKEGQ) are enriched in basic and acidic residues. The segment at 432–454 (DHAEQSWKEGQRPSLNQGMALRT) is disordered.

Belongs to the glutamyl-tRNA reductase family. As to quaternary structure, homodimer.

The catalysed reaction is (S)-4-amino-5-oxopentanoate + tRNA(Glu) + NADP(+) = L-glutamyl-tRNA(Glu) + NADPH + H(+). It participates in porphyrin-containing compound metabolism; protoporphyrin-IX biosynthesis; 5-aminolevulinate from L-glutamyl-tRNA(Glu): step 1/2. In terms of biological role, catalyzes the NADPH-dependent reduction of glutamyl-tRNA(Glu) to glutamate 1-semialdehyde (GSA). This Shouchella clausii (strain KSM-K16) (Alkalihalobacillus clausii) protein is Glutamyl-tRNA reductase.